Reading from the N-terminus, the 166-residue chain is NAD(P)H-quinone oxidoreductase subunit I, chloroplastic (166 aa).

4Fe-4S ferredoxin-type domains follow at residues 55–84 (GRIH…VDWK) and 95–124 (LNYS…MTEE). 8 residues coordinate [4Fe-4S] cluster: cysteine 64, cysteine 67, cysteine 70, cysteine 74, cysteine 104, cysteine 107, cysteine 110, and cysteine 114.

This sequence belongs to the complex I 23 kDa subunit family. NDH is composed of at least 16 different subunits, 5 of which are encoded in the nucleus. The cofactor is [4Fe-4S] cluster.

The protein localises to the plastid. It localises to the chloroplast thylakoid membrane. The enzyme catalyses a plastoquinone + NADH + (n+1) H(+)(in) = a plastoquinol + NAD(+) + n H(+)(out). It catalyses the reaction a plastoquinone + NADPH + (n+1) H(+)(in) = a plastoquinol + NADP(+) + n H(+)(out). In terms of biological role, NDH shuttles electrons from NAD(P)H:plastoquinone, via FMN and iron-sulfur (Fe-S) centers, to quinones in the photosynthetic chain and possibly in a chloroplast respiratory chain. The immediate electron acceptor for the enzyme in this species is believed to be plastoquinone. Couples the redox reaction to proton translocation, and thus conserves the redox energy in a proton gradient. The sequence is that of NAD(P)H-quinone oxidoreductase subunit I, chloroplastic from Ambrosia trifida (Giant ragweed).